The following is an 801-amino-acid chain: Probable inorganic carbon transporter subunit DabA (801 aa).

Zn(2+)-binding residues include C332, D334, H500, and C515.

The protein belongs to the inorganic carbon transporter (TC 9.A.2) DabA family. As to quaternary structure, forms a complex with DabB. It depends on Zn(2+) as a cofactor.

It is found in the cell inner membrane. In terms of biological role, part of an energy-coupled inorganic carbon pump. The protein is Probable inorganic carbon transporter subunit DabA of Marinobacter nauticus (strain ATCC 700491 / DSM 11845 / VT8) (Marinobacter aquaeolei).